The sequence spans 103 residues: Small ribosomal subunit protein uS10 (103 aa).

The protein belongs to the universal ribosomal protein uS10 family. In terms of assembly, part of the 30S ribosomal subunit.

Its function is as follows. Involved in the binding of tRNA to the ribosomes. This is Small ribosomal subunit protein uS10 from Shewanella baltica (strain OS223).